An 887-amino-acid chain; its full sequence is Valine--tRNA ligase (887 aa).

Residues 45–55 carry the 'HIGH' region motif; sequence PNVTGILHMGH. The 'KMSKS' region motif lies at 528-532; sequence KMSKS. Lys531 lines the ATP pocket. Positions 817–887 form a coiled coil; sequence TGLLNNEAEI…LKESLKSFEE (71 aa).

This sequence belongs to the class-I aminoacyl-tRNA synthetase family. ValS type 1 subfamily. Monomer.

The protein resides in the cytoplasm. The enzyme catalyses tRNA(Val) + L-valine + ATP = L-valyl-tRNA(Val) + AMP + diphosphate. Catalyzes the attachment of valine to tRNA(Val). As ValRS can inadvertently accommodate and process structurally similar amino acids such as threonine, to avoid such errors, it has a 'posttransfer' editing activity that hydrolyzes mischarged Thr-tRNA(Val) in a tRNA-dependent manner. In Fusobacterium nucleatum subsp. nucleatum (strain ATCC 25586 / DSM 15643 / BCRC 10681 / CIP 101130 / JCM 8532 / KCTC 2640 / LMG 13131 / VPI 4355), this protein is Valine--tRNA ligase.